Reading from the N-terminus, the 298-residue chain is MSTSIPDVAVHDSPAVAAPLRWVGMDGIVVPVQLTTADGGQHVIGRARAQIDLPAMEVKGIHMSRLYRLLDTHAVEPLTPVGICGLLSAMVNSHADCASTAARVDWHFDWLRRVPALVSNDLSGWRGYPVSLRAEYSAVHVQFWLCVEVGYSSTCPCSAALARQMLADAFLQEHVEVSALSPETVADWLRSNGSYATPHSQRSVARIEVALTEQAVELGLPALVDCAERILSTPVQAAVRRVDEQAFARLNGANLMYVEDATRRLQHGLAIHYSAFRVHVRHLESLHPHDAVASTVDE.

It belongs to the GTP cyclohydrolase IV family.

The catalysed reaction is GTP + H2O = 7,8-dihydroneopterin 3'-triphosphate + formate + H(+). Its pathway is cofactor biosynthesis; 7,8-dihydroneopterin triphosphate biosynthesis; 7,8-dihydroneopterin triphosphate from GTP: step 1/1. Functionally, converts GTP to 7,8-dihydroneopterin triphosphate. The sequence is that of GTP cyclohydrolase FolE2 from Xylella fastidiosa (strain 9a5c).